A 373-amino-acid polypeptide reads, in one-letter code: MSNSPKPLADTDTQSWWTKGSTSASLLGIVIFAASFTSDRFIANSLLSLPLMISTLISVLIASWGIPKLRALKMGQVIREDGPQTHQRKSGTPTMGGLLVVPVGLIIGSFVSVNGESSEQLLALSWITLAYMLIGGFDDWRSLTRGTNTGLTPRGKLLLQTAASLIFLAWAGWQHWIDSSIALPLGISIQMGFMIWPLALFVFLAESNATNLTDGLDGLASGCGALVFTGLAVQLMLRGNDGNPVLAGFCMAMAGAWLGFLMHNRNPAQVFMGDTGSLAMGAALSGVAILSNSLWPLLVMGGVFLAESLSVIIQVWVFKATKGPDGVGRRVFRMAPLHHHYEIGGTDEQMVVRRFWLSTGGLVLLGLLLRPTA.

Transmembrane regions (helical) follow at residues 16–36 (WWTKGSTSASLLGIVIFAASF), 46–66 (LLSLPLMISTLISVLIASWGI), 93–113 (PTMGGLLVVPVGLIIGSFVSV), 120–140 (QLLALSWITLAYMLIGGFDDW), 157–177 (LLLQTAASLIFLAWAGWQHWI), 185–205 (LGISIQMGFMIWPLALFVFLA), 216–236 (LDGLASGCGALVFTGLAVQLM), 242–262 (GNPVLAGFCMAMAGAWLGFLM), 270–290 (VFMGDTGSLAMGAALSGVAIL), 298–318 (LVMGGVFLAESLSVIIQVWVF), and 350–369 (MVVRRFWLSTGGLVLLGLLL).

Belongs to the glycosyltransferase 4 family. MraY subfamily. It depends on Mg(2+) as a cofactor.

The protein resides in the cell inner membrane. It catalyses the reaction UDP-N-acetyl-alpha-D-muramoyl-L-alanyl-gamma-D-glutamyl-meso-2,6-diaminopimeloyl-D-alanyl-D-alanine + di-trans,octa-cis-undecaprenyl phosphate = di-trans,octa-cis-undecaprenyl diphospho-N-acetyl-alpha-D-muramoyl-L-alanyl-D-glutamyl-meso-2,6-diaminopimeloyl-D-alanyl-D-alanine + UMP. It participates in cell wall biogenesis; peptidoglycan biosynthesis. Catalyzes the initial step of the lipid cycle reactions in the biosynthesis of the cell wall peptidoglycan: transfers peptidoglycan precursor phospho-MurNAc-pentapeptide from UDP-MurNAc-pentapeptide onto the lipid carrier undecaprenyl phosphate, yielding undecaprenyl-pyrophosphoryl-MurNAc-pentapeptide, known as lipid I. This Prochlorococcus marinus (strain MIT 9313) protein is Phospho-N-acetylmuramoyl-pentapeptide-transferase.